A 945-amino-acid polypeptide reads, in one-letter code: Isoleucine--tRNA ligase (945 aa).

Positions 66 to 76 match the 'HIGH' region motif; it reads PYANGDIHLGH. Residue E581 participates in L-isoleucyl-5'-AMP binding. The 'KMSKS' region motif lies at 622 to 626; it reads KMSKS. K625 lines the ATP pocket. 4 residues coordinate Zn(2+): C908, C911, C928, and C931.

Belongs to the class-I aminoacyl-tRNA synthetase family. IleS type 1 subfamily. Monomer. Zn(2+) is required as a cofactor.

It localises to the cytoplasm. The enzyme catalyses tRNA(Ile) + L-isoleucine + ATP = L-isoleucyl-tRNA(Ile) + AMP + diphosphate. In terms of biological role, catalyzes the attachment of isoleucine to tRNA(Ile). As IleRS can inadvertently accommodate and process structurally similar amino acids such as valine, to avoid such errors it has two additional distinct tRNA(Ile)-dependent editing activities. One activity is designated as 'pretransfer' editing and involves the hydrolysis of activated Val-AMP. The other activity is designated 'posttransfer' editing and involves deacylation of mischarged Val-tRNA(Ile). This chain is Isoleucine--tRNA ligase, found in Burkholderia ambifaria (strain MC40-6).